The chain runs to 311 residues: Coproporphyrin III ferrochelatase 1 (311 aa).

Residues Tyr12, Arg29, 45 to 46 (RY), Ser53, and Tyr124 each bind Fe-coproporphyrin III. His182 and Glu263 together coordinate Fe(2+).

Belongs to the ferrochelatase family.

It localises to the cytoplasm. It catalyses the reaction Fe-coproporphyrin III + 2 H(+) = coproporphyrin III + Fe(2+). It functions in the pathway porphyrin-containing compound metabolism; protoheme biosynthesis. Functionally, involved in coproporphyrin-dependent heme b biosynthesis. Catalyzes the insertion of ferrous iron into coproporphyrin III to form Fe-coproporphyrin III. This Bacillus cereus (strain ATCC 14579 / DSM 31 / CCUG 7414 / JCM 2152 / NBRC 15305 / NCIMB 9373 / NCTC 2599 / NRRL B-3711) protein is Coproporphyrin III ferrochelatase 1.